The sequence spans 294 residues: Probable 2-(5''-triphosphoribosyl)-3'-dephosphocoenzyme-A synthase (294 aa).

This sequence belongs to the CitG/MdcB family.

It catalyses the reaction 3'-dephospho-CoA + ATP = 2'-(5''-triphospho-alpha-D-ribosyl)-3'-dephospho-CoA + adenine. In Streptococcus equi subsp. equi (strain 4047), this protein is Probable 2-(5''-triphosphoribosyl)-3'-dephosphocoenzyme-A synthase.